Here is a 238-residue protein sequence, read N- to C-terminus: Probable phosphatase phospho2 (238 aa).

The Nucleophile role is filled by Asp-8. 2 residues coordinate Mg(2+): Asp-8 and Asp-10. Asp-10 acts as the Proton donor in catalysis. Asp-19 and Asp-99 together coordinate substrate. Position 179 (Asp-179) interacts with Mg(2+).

Belongs to the HAD-like hydrolase superfamily. PHOSPHO family. The cofactor is Mg(2+).

In terms of biological role, probable phosphatase. The sequence is that of Probable phosphatase phospho2 (phospho2) from Xenopus tropicalis (Western clawed frog).